Here is a 398-residue protein sequence, read N- to C-terminus: Elongation factor Tu (398 aa).

One can recognise a tr-type G domain in the interval 10 to 207 (KPHVNIGTIG…TVDSYIPEPE (198 aa)). The interval 19–26 (GHVDHGKT) is G1. A GTP-binding site is contributed by 19–26 (GHVDHGKT). T26 is a binding site for Mg(2+). The tract at residues 63 to 67 (GITIN) is G2. Residues 84–87 (DAPG) form a G3 region. Residues 84–88 (DAPGH) and 139–142 (NKVD) each bind GTP. The segment at 139 to 142 (NKVD) is G4. The segment at 177 to 179 (SAL) is G5.

The protein belongs to the TRAFAC class translation factor GTPase superfamily. Classic translation factor GTPase family. EF-Tu/EF-1A subfamily. Monomer.

It is found in the cytoplasm. The catalysed reaction is GTP + H2O = GDP + phosphate + H(+). In terms of biological role, GTP hydrolase that promotes the GTP-dependent binding of aminoacyl-tRNA to the A-site of ribosomes during protein biosynthesis. The chain is Elongation factor Tu from Streptococcus pyogenes serotype M28 (strain MGAS6180).